We begin with the raw amino-acid sequence, 128 residues long: Large ribosomal subunit protein uL22 (128 aa).

Belongs to the universal ribosomal protein uL22 family. As to quaternary structure, part of the 50S ribosomal subunit.

Functionally, this protein binds specifically to 23S rRNA; its binding is stimulated by other ribosomal proteins, e.g. L4, L17, and L20. It is important during the early stages of 50S assembly. It makes multiple contacts with different domains of the 23S rRNA in the assembled 50S subunit and ribosome. Its function is as follows. The globular domain of the protein is located near the polypeptide exit tunnel on the outside of the subunit, while an extended beta-hairpin is found that lines the wall of the exit tunnel in the center of the 70S ribosome. The chain is Large ribosomal subunit protein uL22 from Rhodopseudomonas palustris (strain BisB18).